The primary structure comprises 147 residues: UPF0260 protein Ent638_2368 (147 aa).

This sequence belongs to the UPF0260 family.

The sequence is that of UPF0260 protein Ent638_2368 from Enterobacter sp. (strain 638).